The primary structure comprises 454 residues: Putative KilA-N domain-containing protein L4 (454 aa).

The span at 1–12 shows a compositional bias: basic residues; sequence MPQKTSKSKSSR. The segment at 1–159 is disordered; sequence MPQKTSKSKS…DVPEEEYDDN (159 aa). The span at 14–64 shows a compositional bias: basic and acidic residues; the sequence is RYIEDSDDETRGRSRNRSIEKSRSRSLDKSQKKSRDKSLTRSRSKSPEKSK. Residues 65–79 show a composition bias toward basic residues; it reads SRSKSLTRSRSKSPK. Composition is skewed to acidic residues over residues 98 to 123 and 130 to 158; these read YTTE…DEEL and ESDE…EYDD. Residues 172–276 form the KilA-N domain; that stretch reads EFARGKFGDF…LKVSDIVIEY (105 aa).

This Acanthamoeba polyphaga mimivirus (APMV) protein is Putative KilA-N domain-containing protein L4.